The primary structure comprises 206 residues: Large ribosomal subunit protein uL4 (206 aa).

Residues A43–S78 are disordered. A compositionally biased stretch (basic and acidic residues) spans K49–H58. Residues T59–G70 are compositionally biased toward basic residues.

The protein belongs to the universal ribosomal protein uL4 family. In terms of assembly, part of the 50S ribosomal subunit.

Its function is as follows. One of the primary rRNA binding proteins, this protein initially binds near the 5'-end of the 23S rRNA. It is important during the early stages of 50S assembly. It makes multiple contacts with different domains of the 23S rRNA in the assembled 50S subunit and ribosome. Functionally, forms part of the polypeptide exit tunnel. The protein is Large ribosomal subunit protein uL4 of Janthinobacterium sp. (strain Marseille) (Minibacterium massiliensis).